We begin with the raw amino-acid sequence, 239 residues long: Ribosomal RNA small subunit methyltransferase G (239 aa).

Residues Gly-78, Phe-83, Ala-129–Glu-130, and Arg-148 contribute to the S-adenosyl-L-methionine site.

This sequence belongs to the methyltransferase superfamily. RNA methyltransferase RsmG family.

It localises to the cytoplasm. Specifically methylates the N7 position of a guanine in 16S rRNA. The sequence is that of Ribosomal RNA small subunit methyltransferase G from Clostridium tetani (strain Massachusetts / E88).